The following is a 78-amino-acid chain: Probable cytochrome c oxidase subunit 6B (78 aa).

One can recognise a CHCH domain in the interval 21-64 (TKHCWANYVDYYGCVKHYNGDNSKCQTFFNSMNSLCPAAWISEW). The Cx9C motif signature appears at 24 to 34 (CWANYVDYYGC). 2 cysteine pairs are disulfide-bonded: Cys-24-Cys-56 and Cys-34-Cys-45. The Cx10C motif signature appears at 45–56 (CQTFFNSMNSLC).

This sequence belongs to the cytochrome c oxidase subunit 6B family. In terms of assembly, component of the cytochrome c oxidase (complex IV, CIV), a multisubunit enzyme composed of a catalytic core of 3 subunits and several supernumerary subunits. The complex exists as a monomer or a dimer and forms supercomplexes (SCs) in the inner mitochondrial membrane with ubiquinol-cytochrome c oxidoreductase (cytochrome b-c1 complex, complex III, CIII).

Its subcellular location is the mitochondrion inner membrane. The protein operates within energy metabolism; oxidative phosphorylation. Functionally, component of the cytochrome c oxidase, the last enzyme in the mitochondrial electron transport chain which drives oxidative phosphorylation. The respiratory chain contains 3 multisubunit complexes succinate dehydrogenase (complex II, CII), ubiquinol-cytochrome c oxidoreductase (cytochrome b-c1 complex, complex III, CIII) and cytochrome c oxidase (complex IV, CIV), that cooperate to transfer electrons derived from NADH and succinate to molecular oxygen, creating an electrochemical gradient over the inner membrane that drives transmembrane transport and the ATP synthase. Cytochrome c oxidase is the component of the respiratory chain that catalyzes the reduction of oxygen to water. Electrons originating from reduced cytochrome c in the intermembrane space (IMS) are transferred via the dinuclear copper A center (CU(A)) of subunit 2 and heme A of subunit 1 to the active site in subunit 1, a binuclear center (BNC) formed by heme A3 and copper B (CU(B)). The BNC reduces molecular oxygen to 2 water molecules using 4 electrons from cytochrome c in the IMS and 4 protons from the mitochondrial matrix. The chain is Probable cytochrome c oxidase subunit 6B from Dictyostelium discoideum (Social amoeba).